Reading from the N-terminus, the 96-residue chain is Small ribosomal subunit protein bS6 (96 aa).

It belongs to the bacterial ribosomal protein bS6 family.

Binds together with bS18 to 16S ribosomal RNA. This Bacillus cereus (strain G9842) protein is Small ribosomal subunit protein bS6.